The primary structure comprises 550 residues: Coiled-coil domain-containing protein 60 (550 aa).

The tract at residues 1-21 is disordered; sequence MTKVPATKKLQSSPNSGAVRP. Positions 71-98 form a coiled coil; it reads AILREETAKKKKQQQLQKLKEEERNKFQ. Disordered regions lie at residues 219–293 and 336–367; these read KFKI…EPLY and AYKE…KKSK. A compositionally biased stretch (low complexity) spans 235-256; it reads RGSTLSLSRASGGSSPQSSMIS. Residues 336-345 show a composition bias toward polar residues; that stretch reads AYKEMQTTLK.

The polypeptide is Coiled-coil domain-containing protein 60 (CCDC60) (Homo sapiens (Human)).